The chain runs to 130 residues: Small ribosomal subunit protein uS9 (130 aa).

Belongs to the universal ribosomal protein uS9 family.

This Haemophilus influenzae (strain 86-028NP) protein is Small ribosomal subunit protein uS9.